We begin with the raw amino-acid sequence, 549 residues long: Membrane protein insertase YidC (549 aa).

A helical membrane pass occupies residues 9–29 (LRLILAIALSFLFIALYSYFF). Residues 37–51 (TETTKQETTNNHTAT) are compositionally biased toward low complexity. Residues 37–56 (TETTKQETTNNHTATSPTAS) are disordered. The next 5 membrane-spanning stretches (helical) occupy residues 328–348 (VIEY…LDYL), 351–371 (FVGN…IILY), 417–437 (GANP…FFAI), 452–472 (WVLW…PLLM), and 498–518 (LLPL…VLYW).

This sequence belongs to the OXA1/ALB3/YidC family. Type 1 subfamily. As to quaternary structure, interacts with the Sec translocase complex via SecD. Specifically interacts with transmembrane segments of nascent integral membrane proteins during membrane integration.

The protein localises to the cell inner membrane. Functionally, required for the insertion and/or proper folding and/or complex formation of integral membrane proteins into the membrane. Involved in integration of membrane proteins that insert both dependently and independently of the Sec translocase complex, as well as at least some lipoproteins. Aids folding of multispanning membrane proteins. This chain is Membrane protein insertase YidC, found in Helicobacter pylori (strain J99 / ATCC 700824) (Campylobacter pylori J99).